The sequence spans 160 residues: General odorant-binding protein 2 (160 aa).

The N-terminal stretch at 1–19 (MGYKLLLMYIAIVIDSVIG) is a signal peptide. 3 cysteine pairs are disulfide-bonded: Cys38–Cys73, Cys69–Cys127, and Cys116–Cys136.

This sequence belongs to the PBP/GOBP family. In terms of tissue distribution, antenna.

Its function is as follows. Present in the aqueous fluid surrounding olfactory sensory dendrites and are thought to aid in the capture and transport of hydrophobic odorants into and through this fluid. This is General odorant-binding protein 2 from Antheraea pernyi (Chinese oak silk moth).